The following is a 526-amino-acid chain: Protein DETOXIFICATION 43 (526 aa).

At 1 to 36 (MTETGDDLATVKKPIPFLVIFKDLRHVFSRDTTGRE) the chain is on the cytoplasmic side. A helical membrane pass occupies residues 37-57 (ILGIAFPAALALAADPIASLI). Residues 58–59 (DT) lie on the Extracellular side of the membrane. The helical transmembrane segment at 60-80 (AFVGRLGAVQLAAVGVSIAIF) threads the bilayer. The Cytoplasmic segment spans residues 81–170 (NQASRITIFP…NKKEKRTIRT (90 aa)). The segment at 133-166 (ISSPTSNDTNQPQQPPAPDTKSNSGNKSNKKEKR) is disordered. Residues 134–144 (SSPTSNDTNQP) show a composition bias toward polar residues. Residues 171-191 (ASTAMILGLILGLVQAIFLIF) traverse the membrane as a helical segment. The Extracellular portion of the chain corresponds to 192–215 (SSKLLLGVMGVKPNSPMLSPAHKY). The chain crosses the membrane as a helical span at residues 216-236 (LSIRALGAPALLLSLAMQGIF). Topologically, residues 237–244 (RGFKDTKT) are cytoplasmic. A helical transmembrane segment spans residues 245–267 (PLFATVVADVINIVLDPIFIFVL). Residues 268-270 (RLG) lie on the Extracellular side of the membrane. Residues 271–293 (IIGAAIAHVISQYFMTLILFVFL) traverse the membrane as a helical segment. Residues 294–316 (AKKVNLIPPNFGDLQFGRFLKNG) are Cytoplasmic-facing. The chain crosses the membrane as a helical span at residues 317 to 337 (LLLLARTIAVTFCQTLAAAMA). The Extracellular segment spans residues 338–353 (ARLGTTPMAAFQICLQ). The helical transmembrane segment at 354–374 (VWLTSSLLNDGLAVAGQAILA) threads the bilayer. Residues 375 to 396 (CSFAEKDYNKVTAVASRVLQMG) are Cytoplasmic-facing. Residues 397–417 (FVLGLGLSVFVGLGLYFGAGV) traverse the membrane as a helical segment. The Extracellular segment spans residues 418–426 (FSKDPAVIH). Residues 427 to 447 (LMAIGIPFIAATQPINSLAFV) form a helical membrane-spanning segment. The Cytoplasmic portion of the chain corresponds to 448-457 (LDGVNFGASD). The helical transmembrane segment at 458–478 (FAYTAYSMVGVAAISIAAVIY) threads the bilayer. Topologically, residues 479-484 (MAKTNG) are extracellular. A helical membrane pass occupies residues 485 to 505 (FIGIWIALTIYMALRAITGIA). The Cytoplasmic portion of the chain corresponds to 506-526 (RMATGTGPWRFLRGRSSSSSS).

This sequence belongs to the multi antimicrobial extrusion (MATE) (TC 2.A.66.1) family. In terms of tissue distribution, expressed in roots in the pericycle and cells internal to the pericycle and surrounding the vascular tissue. Also expressed in seed and flower.

It localises to the cell membrane. Citrate transporter responsible for loading citrate into xylem tissues, which helps facilitate iron transport to shoots. Mediates the citrate release in the apoplastic spaces during plant development allowing iron nutrition between symplastically disconnected tissues. The sequence is that of Protein DETOXIFICATION 43 from Arabidopsis thaliana (Mouse-ear cress).